The chain runs to 484 residues: Protein nucleotidyltransferase YdiU (484 aa).

Residues glycine 81, glycine 83, arginine 84, lysine 103, aspartate 115, glycine 116, arginine 166, and arginine 173 each contribute to the ATP site. The active-site Proton acceptor is the aspartate 244. Mg(2+)-binding residues include asparagine 245 and aspartate 254. Aspartate 254 is an ATP binding site.

It belongs to the SELO family. Mg(2+) is required as a cofactor. Mn(2+) serves as cofactor.

It carries out the reaction L-seryl-[protein] + ATP = 3-O-(5'-adenylyl)-L-seryl-[protein] + diphosphate. The catalysed reaction is L-threonyl-[protein] + ATP = 3-O-(5'-adenylyl)-L-threonyl-[protein] + diphosphate. The enzyme catalyses L-tyrosyl-[protein] + ATP = O-(5'-adenylyl)-L-tyrosyl-[protein] + diphosphate. It catalyses the reaction L-histidyl-[protein] + UTP = N(tele)-(5'-uridylyl)-L-histidyl-[protein] + diphosphate. It carries out the reaction L-seryl-[protein] + UTP = O-(5'-uridylyl)-L-seryl-[protein] + diphosphate. The catalysed reaction is L-tyrosyl-[protein] + UTP = O-(5'-uridylyl)-L-tyrosyl-[protein] + diphosphate. Its function is as follows. Nucleotidyltransferase involved in the post-translational modification of proteins. It can catalyze the addition of adenosine monophosphate (AMP) or uridine monophosphate (UMP) to a protein, resulting in modifications known as AMPylation and UMPylation. This chain is Protein nucleotidyltransferase YdiU, found in Shewanella oneidensis (strain ATCC 700550 / JCM 31522 / CIP 106686 / LMG 19005 / NCIMB 14063 / MR-1).